Reading from the N-terminus, the 398-residue chain is 1-deoxy-D-xylulose 5-phosphate reductoisomerase (398 aa).

NADPH contacts are provided by threonine 11, glycine 12, serine 13, isoleucine 14, arginine 38, asparagine 39, and asparagine 125. Lysine 126 is a 1-deoxy-D-xylulose 5-phosphate binding site. Position 127 (glutamate 127) interacts with NADPH. Aspartate 151 serves as a coordination point for Mn(2+). Residues serine 152, glutamate 153, serine 179, and histidine 202 each coordinate 1-deoxy-D-xylulose 5-phosphate. Glutamate 153 is a binding site for Mn(2+). Glycine 208 serves as a coordination point for NADPH. 1-deoxy-D-xylulose 5-phosphate contacts are provided by serine 215, asparagine 220, lysine 221, and glutamate 224. Position 224 (glutamate 224) interacts with Mn(2+).

Belongs to the DXR family. The cofactor is Mg(2+). Mn(2+) is required as a cofactor.

The enzyme catalyses 2-C-methyl-D-erythritol 4-phosphate + NADP(+) = 1-deoxy-D-xylulose 5-phosphate + NADPH + H(+). The protein operates within isoprenoid biosynthesis; isopentenyl diphosphate biosynthesis via DXP pathway; isopentenyl diphosphate from 1-deoxy-D-xylulose 5-phosphate: step 1/6. In terms of biological role, catalyzes the NADPH-dependent rearrangement and reduction of 1-deoxy-D-xylulose-5-phosphate (DXP) to 2-C-methyl-D-erythritol 4-phosphate (MEP). This chain is 1-deoxy-D-xylulose 5-phosphate reductoisomerase, found in Burkholderia cenocepacia (strain HI2424).